A 587-amino-acid chain; its full sequence is 65-kDa microtubule-associated protein 1 (587 aa).

Coiled coils occupy residues 46 to 84 (QECL…TMSL), 151 to 181 (DESD…LRKV), 234 to 257 (LTLK…LIDL), 290 to 317 (ALAR…MKEI), and 461 to 489 (AMLD…VQEQ). Basic and acidic residues predominate over residues 474–494 (EEEKRRLREQKKVQEQPHVEQ). Residues 474-587 (EEEKRRLREQ…AADHQVPASP (114 aa)) are disordered. Ser-503 carries the post-translational modification Phosphoserine. Phosphothreonine is present on Thr-526. A compositionally biased stretch (polar residues) spans 531 to 542 (LSLNANQNGSRS). Residues Ser-532 and Ser-540 each carry the phosphoserine modification. A phosphothreonine mark is found at Thr-543 and Thr-552. The segment covering 543 to 553 (TAKEAGRRETL) has biased composition (basic and acidic residues). 3 positions are modified to phosphoserine: Ser-573, Ser-576, and Ser-586.

It belongs to the MAP65/ASE1 family. In terms of assembly, forms dimer. Binds to MT, mostly with coaligned MT, both between parallel or antiparallel, forming thick bundles. Interacts with the alpha-tubulin subunit of the tubulin heterodimer. Bundles polymerized MT via the formation of 25-nm crossbridges at specific stages of the cell cycle (e.g. bundles microtubules in interphase, anaphase and telophase but does not bind microtubules in prophase or metaphase), at the plus-end, the minus-end, or along the entire length of MT, and along phragmoplast MT. Interacts with SH3P1 and MPK4. Basal phosphorylation at all stages of the cell cycle. MT-binding properties inhibited by hyperphosphorylation mediated by CDKs and/or MAPKs (e.g. ANP2, ANP3, MPK4 and MPK6) during prometaphase and metaphase. Expressed in all organs and tissues with the exception of sepals and anthers. Bound to subsets of microtubules in the cells of root epidermis, hypocotyl and cotyledons (at protein level).

The protein localises to the nucleus. It localises to the cytoplasm. It is found in the cytoskeleton. The protein resides in the spindle. Its subcellular location is the phragmoplast. The protein localises to the cell cortex. Microtubule-associated protein that bundle and stabilize adjacent microtubules (MT) of the cell cortex. Enhances MT nucleation. Can also bind to tubulin dimers and promotes their polymerization. Confers MT resistance to the drug propyzamide and cold conditions. Plays a role in the central spindle at anaphase to early cytokinesis but is not essential at the midline of the phragmoplast at later stages. Represses metaphase spindle organization and the transition to anaphase in dephosphorylated active form. Promotes the formation of a planar network of antiparallel microtubules. May be involved in stomatal movement modulation by regulating the dynamic and arrangement of cortical MT. This is 65-kDa microtubule-associated protein 1 (MAP65-1) from Arabidopsis thaliana (Mouse-ear cress).